The primary structure comprises 1149 residues: Guanine nucleotide exchange factor DBS (1149 aa).

The 173-residue stretch at 52–224 (MATASDEIMH…DLGGTLDYCH (173 aa)) folds into the CRAL-TRIO domain. A Spectrin repeat occupies 355–454 (HFEQGFREVK…SEVTRRRDLL (100 aa)). Phosphoserine is present on residues S457, S462, S471, and S480. Residues 503–528 (LETGAENKIQELNKIYKEYECILNQD) adopt a coiled-coil conformation. Residues 555–627 (KKLAAKQTRP…RTSSTGEEEE (73 aa)) are disordered. The segment covering 583-594 (PGSWRSSENSSS) has biased composition (low complexity). Residues 607–616 (AKSEMSEPRQ) show a composition bias toward basic and acidic residues. Residue S621 is modified to Phosphoserine. T622 carries the phosphothreonine modification. Residues 632–812 (LRRHVMNELL…LGILKAVNDS (181 aa)) form the DH domain. The PH domain maps to 830–946 (KLLMQGSFSV…WVNEIRKVLT (117 aa)). A disordered region spans residues 956–1033 (SQHRALEQSH…EAPEEDGGWS (78 aa)). The segment covering 964–978 (SHSLPLPTPASTSPT) has biased composition (low complexity). 4 positions are modified to phosphoserine: S1033, S1034, S1041, and S1042. Residues 1055 to 1116 (LVPGKYTVLM…PASSLATLLG (62 aa)) enclose the SH3 domain.

The protein belongs to the MCF2 family. As to quaternary structure, interacts with GTP-bound RAC1. Interacts with CDC42. Interacts with RHOA. Interacts with CCPG1, which results in specific inhibition of its exchange activity toward RHOA, but does not affect its activity on CDC42. Mainly phosphorylated on serine. Highest expression in the brain, where it is found in neurons and alpha-tanycytes (at protein level). Detected in brain, and at lower levels in the heart.

It localises to the cytoplasm. Its subcellular location is the cell membrane. Guanine nucleotide exchange factor that catalyzes guanine nucleotide exchange on RHOA and CDC42, and thereby contributes to the regulation of RHOA and CDC42 signaling pathways. Seems to lack activity with RAC1. Becomes activated and highly tumorigenic by truncation of the N-terminus. This chain is Guanine nucleotide exchange factor DBS (Mcf2l), found in Rattus norvegicus (Rat).